Here is a 44-residue protein sequence, read N- to C-terminus: Thymosin beta-10 (44 aa).

Basic and acidic residues-rich tracts occupy residues 1-25 and 33-44; these read MADK…ETQE and ETIEQEKRSEIS. The tract at residues 1–44 is disordered; sequence MADKPDMGEIASFDKAKLKKTETQEKNTLPTKETIEQEKRSEIS. Ala-2 bears the N-acetylalanine mark. At Lys-4 the chain carries N6-acetyllysine. Ser-12 carries the phosphoserine modification. Lys-15 is subject to N6-acetyllysine. Thr-21, Thr-23, and Thr-34 each carry phosphothreonine. Lys-39 is subject to N6-acetyllysine. Ser-41 bears the Phosphoserine mark.

The protein belongs to the thymosin beta family.

It is found in the cytoplasm. The protein localises to the cytoskeleton. Plays an important role in the organization of the cytoskeleton. Binds to and sequesters actin monomers (G actin) and therefore inhibits actin polymerization. The polypeptide is Thymosin beta-10 (Tmsb10) (Rattus norvegicus (Rat)).